The following is a 355-amino-acid chain: 5-formaminoimidazole-4-carboxamide-1-(beta)-D-ribofuranosyl 5'-monophosphate synthetase (355 aa).

Residues His27 and Ser94 each contribute to the 5-amino-1-(5-phospho-beta-D-ribosyl)imidazole-4-carboxamide site. Positions 101-332 constitute an ATP-grasp domain; sequence TESFAELAVP…YSDMIEENLS (232 aa). ATP contacts are provided by residues 144–195 and Glu225; that span reads PEKI…TRYY. 5-amino-1-(5-phospho-beta-D-ribosyl)imidazole-4-carboxamide is bound at residue Asn254. Residues Glu292 and Glu305 each contribute to the Mg(2+) site.

It belongs to the phosphohexose mutase family. Mg(2+) serves as cofactor. Mn(2+) is required as a cofactor.

The catalysed reaction is 5-amino-1-(5-phospho-beta-D-ribosyl)imidazole-4-carboxamide + formate + ATP = 5-formamido-1-(5-phospho-D-ribosyl)imidazole-4-carboxamide + ADP + phosphate. Its pathway is purine metabolism; IMP biosynthesis via de novo pathway; 5-formamido-1-(5-phospho-D-ribosyl)imidazole-4-carboxamide from 5-amino-1-(5-phospho-D-ribosyl)imidazole-4-carboxamide (formate route): step 1/1. Functionally, catalyzes the ATP- and formate-dependent formylation of 5-aminoimidazole-4-carboxamide-1-beta-d-ribofuranosyl 5'-monophosphate (AICAR) to 5-formaminoimidazole-4-carboxamide-1-beta-d-ribofuranosyl 5'-monophosphate (FAICAR) in the absence of folates. The chain is 5-formaminoimidazole-4-carboxamide-1-(beta)-D-ribofuranosyl 5'-monophosphate synthetase from Methanococcoides burtonii (strain DSM 6242 / NBRC 107633 / OCM 468 / ACE-M).